The primary structure comprises 369 residues: Peptide chain release factor 2 (369 aa).

Gln-251 bears the N5-methylglutamine mark.

This sequence belongs to the prokaryotic/mitochondrial release factor family. Methylated by PrmC. Methylation increases the termination efficiency of RF2.

The protein resides in the cytoplasm. Functionally, peptide chain release factor 2 directs the termination of translation in response to the peptide chain termination codons UGA and UAA. The sequence is that of Peptide chain release factor 2 from Chlamydia trachomatis serovar A (strain ATCC VR-571B / DSM 19440 / HAR-13).